A 196-amino-acid chain; its full sequence is T-cell surface glycoprotein CD3 epsilon chain (196 aa).

Residues 1–21 form the signal peptide; sequence MPSGNLWKVLGLCLLSVGAWG. The Extracellular segment spans residues 22 to 116; sequence QEDIERPDED…VCENCVEVDL (95 aa). Positions 28-102 constitute an Ig-like domain; the sequence is PDEDTQKTFK…VGEKTSHRLY (75 aa). A disulfide bridge connects residues Cys49 and Cys91. Residues 117–137 traverse the membrane as a helical segment; sequence MAVVTIIVVDICITLGLLMVV. Over 138–196 the chain is Cytoplasmic; that stretch reads YYYSKSRKAKAMPVTRGAGAGGRPRGQNRERPPPVPNPDYEPIRKGQRDLYSGLNQRGR. Residues 150–196 form a disordered region; the sequence is PVTRGAGAGGRPRGQNRERPPPVPNPDYEPIRKGQRDLYSGLNQRGR. The segment at 164 to 181 is NUMB-binding region; sequence QNRERPPPVPNPDYEPIR. Residues 167–194 enclose the ITAM domain; that stretch reads ERPPPVPNPDYEPIRKGQRDLYSGLNQR. The interval 168-175 is proline-rich sequence; the sequence is RPPPVPNP. Phosphotyrosine occurs at positions 177 and 188.

As to quaternary structure, the TCR-CD3 complex is composed of a CD3D/CD3E and a CD3G/CD3E heterodimers that preferentially associate with TCRalpha and TCRbeta, respectively, to form TCRalpha/CD3E/CD3G and TCRbeta/CD3G/CD3E trimers. In turn, the hexamer interacts with CD3Z homodimer to form the TCR-CD3 complex. Alternatively, TCRalpha and TCRbeta can be replaced by TCRgamma and TCRdelta. Interacts with CD6. Interacts (via Proline-rich sequence) with NCK1; the interaction is ligand dependent but independent of tyrosine kinase activation. Post-translationally, phosphorylated on Tyr residues after T-cell receptor triggering by LCK in association with CD4/CD8.

The protein resides in the cell membrane. Part of the TCR-CD3 complex present on T-lymphocyte cell surface that plays an essential role in adaptive immune response. When antigen presenting cells (APCs) activate T-cell receptor (TCR), TCR-mediated signals are transmitted across the cell membrane by the CD3 chains CD3D, CD3E, CD3G and CD3Z. All CD3 chains contain immunoreceptor tyrosine-based activation motifs (ITAMs) in their cytoplasmic domain. Upon TCR engagement, these motifs become phosphorylated by Src family protein tyrosine kinases LCK and FYN, resulting in the activation of downstream signaling pathways. In addition of this role of signal transduction in T-cell activation, CD3E plays an essential role in correct T-cell development. Also participates in internalization and cell surface down-regulation of TCR-CD3 complexes via endocytosis sequences present in CD3E cytosolic region. In addition to its role as a TCR coreceptor, it serves as a receptor for ITPRIPL1. Ligand recognition inhibits T-cell activation by promoting interaction with NCK1, which prevents CD3E-ZAP70 interaction and blocks the ERK-NFkB signaling cascade and calcium influx. This is T-cell surface glycoprotein CD3 epsilon chain (CD3E) from Sus scrofa (Pig).